Consider the following 75-residue polypeptide: UPF0235 protein Ava_3894 (75 aa).

Residues 1-32 (MQKKVKVKPNSKQQKIAEQDDGSLTVHLKSPP) are disordered.

The protein belongs to the UPF0235 family.

In Trichormus variabilis (strain ATCC 29413 / PCC 7937) (Anabaena variabilis), this protein is UPF0235 protein Ava_3894.